The primary structure comprises 158 residues: Ribosome maturation factor RimP (158 aa).

The protein belongs to the RimP family.

The protein localises to the cytoplasm. Functionally, required for maturation of 30S ribosomal subunits. This chain is Ribosome maturation factor RimP, found in Deinococcus radiodurans (strain ATCC 13939 / DSM 20539 / JCM 16871 / CCUG 27074 / LMG 4051 / NBRC 15346 / NCIMB 9279 / VKM B-1422 / R1).